The sequence spans 958 residues: Glycine dehydrogenase (decarboxylating) (958 aa).

At Lys-708 the chain carries N6-(pyridoxal phosphate)lysine.

This sequence belongs to the GcvP family. In terms of assembly, the glycine cleavage system is composed of four proteins: P, T, L and H. Pyridoxal 5'-phosphate serves as cofactor.

It catalyses the reaction N(6)-[(R)-lipoyl]-L-lysyl-[glycine-cleavage complex H protein] + glycine + H(+) = N(6)-[(R)-S(8)-aminomethyldihydrolipoyl]-L-lysyl-[glycine-cleavage complex H protein] + CO2. The glycine cleavage system catalyzes the degradation of glycine. The P protein binds the alpha-amino group of glycine through its pyridoxal phosphate cofactor; CO(2) is released and the remaining methylamine moiety is then transferred to the lipoamide cofactor of the H protein. This Proteus mirabilis (strain HI4320) protein is Glycine dehydrogenase (decarboxylating).